We begin with the raw amino-acid sequence, 656 residues long: Ribosome quality control complex subunit 1 (656 aa).

A compositionally biased stretch (basic residues) spans 1–11 (MSSRALRKLQR). Disordered regions lie at residues 1–35 (MSSRALRKLQRQRQTELLEEALDSESDEDDEFSST), 51–122 (NNAI…LESS), and 634–656 (LFTSTNSETEPAEESTEEMGQGD). Positions 17–32 (LLEEALDSESDEDDEF) are enriched in acidic residues. The segment covering 51-63 (NNAINSEAEKSVS) has biased composition (basic and acidic residues). A phosphoserine mark is found at serine 56, serine 61, and serine 63. Basic residues predominate over residues 83-101 (KKAKNKKKKKKQQKKKKVT). Positions 102–122 (GKRDLDNQSSDNEKLEGLESS) are enriched in basic and acidic residues. Residues serine 110 and serine 111 each carry the phosphoserine modification.

Belongs to the TCF25 family. Component of the ribosome quality control complex (RQC), composed of the E3 ubiquitin ligase rkr1/ltn1, rqc1 and mtr1/rqc2, as well as cdc48 and its ubiquitin-binding cofactors. RQC forms a stable complex with 60S ribosomal subunits.

The protein localises to the cytoplasm. Its function is as follows. Component of the ribosome quality control complex (RQC), a ribosome-associated complex that mediates ubiquitination and extraction of incompletely synthesized nascent chains for proteasomal degradation. Within the RQC complex, rqc1 is essential for the recruitment of cdc48 to incompletely synthesized nascent polypeptides that are ubiquitinated by rkr1/ltn1. The polypeptide is Ribosome quality control complex subunit 1 (Schizosaccharomyces pombe (strain 972 / ATCC 24843) (Fission yeast)).